A 610-amino-acid chain; its full sequence is Prolactin receptor (610 aa).

The signal sequence occupies residues 1–19 (MPSALAFVLLVLNISLLKG). At 20-229 (QSPPGKPEIH…EMPNDFTLKD (210 aa)) the chain is on the extracellular side. 2 Fibronectin type-III domains span residues 22–122 (PPGK…IVEP) and 124–224 (PPRN…MPND). A disulfide bond links C31 and C41. A glycan (N-linked (GlcNAc...) asparagine) is linked at N54. A disulfide bridge connects residues C70 and C81. N-linked (GlcNAc...) asparagine glycans are attached at residues N99 and N127. Zn(2+) contacts are provided by D206 and H207. The WSXWS motif signature appears at 210 to 214 (WSRWS). A helical membrane pass occupies residues 230 to 253 (TTVWIIVAILSAVICLIMVWAVAL). Residues 254-610 (KGYSMMTCIF…DPTCFMHSFH (357 aa)) are Cytoplasmic-facing. A Box 1 motif motif is present at residues 262–270 (IFPPVPGPK). Disordered stretches follow at residues 317-355 (DERLMPSHSKEYPGQGVKPTHLDPDSDSGHGSYDSHSLL), 458-482 (TGEEEVAEQKGAKSFPSDKQNTPWP), and 564-584 (AKKAPPSFEADQSEKDLASFT). The span at 318–327 (ERLMPSHSKE) shows a compositional bias: basic and acidic residues. A compositionally biased stretch (low complexity) spans 345–354 (GHGSYDSHSL).

It belongs to the type I cytokine receptor family. Type 1 subfamily. In terms of assembly, interacts with SMARCA1. Interacts with NEK3 and VAV2 and this interaction is prolactin-dependent.

It localises to the membrane. In terms of biological role, this is a receptor for the anterior pituitary hormone prolactin. The polypeptide is Prolactin receptor (Prlr) (Rattus norvegicus (Rat)).